The chain runs to 325 residues: NADH-quinone oxidoreductase subunit H (325 aa).

8 helical membrane-spanning segments follow: residues 11-31 (ILLT…CGAF), 81-101 (VIFT…FAIV), 114-134 (IGIL…LFAG), 154-174 (LSYE…AGSF), 186-206 (VWNV…GVAV), 237-257 (FFVG…TLFF), 265-285 (LPPF…FILI), and 304-324 (ICLP…LWQA).

The protein belongs to the complex I subunit 1 family. In terms of assembly, NDH-1 is composed of 13 different subunits. Subunits NuoA, H, J, K, L, M, N constitute the membrane sector of the complex.

The protein localises to the cell inner membrane. The enzyme catalyses a quinone + NADH + 5 H(+)(in) = a quinol + NAD(+) + 4 H(+)(out). In terms of biological role, NDH-1 shuttles electrons from NADH, via FMN and iron-sulfur (Fe-S) centers, to quinones in the respiratory chain. The immediate electron acceptor for the enzyme in this species is believed to be ubiquinone. Couples the redox reaction to proton translocation (for every two electrons transferred, four hydrogen ions are translocated across the cytoplasmic membrane), and thus conserves the redox energy in a proton gradient. This subunit may bind ubiquinone. This chain is NADH-quinone oxidoreductase subunit H, found in Escherichia coli O45:K1 (strain S88 / ExPEC).